Here is a 136-residue protein sequence, read N- to C-terminus: MSQLVYFSSSSENTHRFMQRLGLPAIRIPLNERERIRVDEPYILVVPSYGGGGTAGAVPRQVIRFLNDEHNRALIRGVIASGNRNFGEAYGRAGEVISQKCGVPWLYRFELMGTQSDIDNVRKGVSEFWQRQPQNV.

This sequence belongs to the NrdI family.

Probably involved in ribonucleotide reductase function. This is Protein NrdI from Citrobacter koseri (strain ATCC BAA-895 / CDC 4225-83 / SGSC4696).